The following is a 679-amino-acid chain: Glycine--tRNA ligase beta subunit (679 aa).

The protein belongs to the class-II aminoacyl-tRNA synthetase family. Tetramer of two alpha and two beta subunits.

It localises to the cytoplasm. It catalyses the reaction tRNA(Gly) + glycine + ATP = glycyl-tRNA(Gly) + AMP + diphosphate. This Streptococcus pyogenes serotype M6 (strain ATCC BAA-946 / MGAS10394) protein is Glycine--tRNA ligase beta subunit.